Here is a 663-residue protein sequence, read N- to C-terminus: Bifunctional polymyxin resistance protein ArnA (663 aa).

Positions 1–304 are formyltransferase ArnAFT; sequence MKAVVFAYHD…ELGLVAGMRL (304 aa). The active-site Proton donor; for formyltransferase activity is the H104. (6R)-10-formyltetrahydrofolate is bound by residues R114 and 136–140; that span reads TMRPD. Residues 316–663 are dehydrogenase ArnADH; sequence RLTRVLILGV…GAVSTGVEHD (348 aa). Residues D349 and 370-371 contribute to the NAD(+) site; that span reads DI. Residues A395, Y400, and 434 to 435 each bind UDP-alpha-D-glucuronate; that span reads TS. The active-site Proton acceptor; for decarboxylase activity is the E436. Residues R462, N494, 528–537, and Y615 each bind UDP-alpha-D-glucuronate; that span reads QLVDGGAQKR. R621 acts as the Proton donor; for decarboxylase activity in catalysis.

The protein in the N-terminal section; belongs to the Fmt family. UDP-L-Ara4N formyltransferase subfamily. In the C-terminal section; belongs to the NAD(P)-dependent epimerase/dehydratase family. UDP-glucuronic acid decarboxylase subfamily. In terms of assembly, homohexamer, formed by a dimer of trimers.

It catalyses the reaction UDP-alpha-D-glucuronate + NAD(+) = UDP-beta-L-threo-pentopyranos-4-ulose + CO2 + NADH. The catalysed reaction is UDP-4-amino-4-deoxy-beta-L-arabinose + (6R)-10-formyltetrahydrofolate = UDP-4-deoxy-4-formamido-beta-L-arabinose + (6S)-5,6,7,8-tetrahydrofolate + H(+). The protein operates within nucleotide-sugar biosynthesis; UDP-4-deoxy-4-formamido-beta-L-arabinose biosynthesis; UDP-4-deoxy-4-formamido-beta-L-arabinose from UDP-alpha-D-glucuronate: step 1/3. Its pathway is nucleotide-sugar biosynthesis; UDP-4-deoxy-4-formamido-beta-L-arabinose biosynthesis; UDP-4-deoxy-4-formamido-beta-L-arabinose from UDP-alpha-D-glucuronate: step 3/3. It participates in bacterial outer membrane biogenesis; lipopolysaccharide biosynthesis. Functionally, bifunctional enzyme that catalyzes the oxidative decarboxylation of UDP-glucuronic acid (UDP-GlcUA) to UDP-4-keto-arabinose (UDP-Ara4O) and the addition of a formyl group to UDP-4-amino-4-deoxy-L-arabinose (UDP-L-Ara4N) to form UDP-L-4-formamido-arabinose (UDP-L-Ara4FN). The modified arabinose is attached to lipid A and is required for resistance to polymyxin and cationic antimicrobial peptides. This Aeromonas salmonicida (strain A449) protein is Bifunctional polymyxin resistance protein ArnA.